Here is a 496-residue protein sequence, read N- to C-terminus: MKYVLSLDQGTTSSRAIVFDEKGNVVSKVNKEFRQIYPRPGWVEHDPVEIWESQIEVAKKAIEEAGIKPEDIAAIGITNQRETTIVWDKNTGKPVYNAIVWQCRRTAPICDELKEKGYSEFIRERTGLVIDAYFSGTKIKWILDNVEGVREKAEKGEVLFGTVDTWLIWNLTGGRVHVTDYSNASRTMIFNIHKLDWDDEILELLNIPRAMLPQVMPSSHVYGYTAKDIFGVEIPIAGDAGDQQAALFGQACFQPGMLKNTYGTGCFLLMNTGEKAFESKSGLLTTIAWGINGKVYYALEGSIFITGAAVQWLRDGLKIISNAAETEELATKVPDNGGVFFVPAFVGLGAPYWDMYARGLIIGITRGTTREHIVRAVLESIAYQTRDVVEVMEKDSDIKVETLRVDGGAVVNNFLMQFQADILGVPVERPVVNETTALGAAYLAGLAVGYWKDQEEIASLWQLDRRFEPSMNSEERERLYSKWKEAVSRSLGWEKR.

Position 11 (T11) interacts with ADP. Positions 11, 12, and 13 each coordinate ATP. Sn-glycerol 3-phosphate is bound at residue T11. Position 15 (R15) interacts with ADP. Sn-glycerol 3-phosphate is bound by residues R81, E82, Y133, and D242. R81, E82, Y133, D242, and Q243 together coordinate glycerol. Positions 264 and 307 each coordinate ADP. The ATP site is built by T264, G307, Q311, and G408. ADP is bound by residues G408 and N412.

Belongs to the FGGY kinase family.

The enzyme catalyses glycerol + ATP = sn-glycerol 3-phosphate + ADP + H(+). It functions in the pathway polyol metabolism; glycerol degradation via glycerol kinase pathway; sn-glycerol 3-phosphate from glycerol: step 1/1. With respect to regulation, inhibited by fructose 1,6-bisphosphate (FBP). Functionally, key enzyme in the regulation of glycerol uptake and metabolism. Catalyzes the phosphorylation of glycerol to yield sn-glycerol 3-phosphate. This Thermotoga maritima (strain ATCC 43589 / DSM 3109 / JCM 10099 / NBRC 100826 / MSB8) protein is Glycerol kinase 2.